The following is a 294-amino-acid chain: Elongation factor Ts (294 aa).

Residues 81 to 84 (TDFV) form an involved in Mg(2+) ion dislocation from EF-Tu region.

It belongs to the EF-Ts family.

It is found in the cytoplasm. Associates with the EF-Tu.GDP complex and induces the exchange of GDP to GTP. It remains bound to the aminoacyl-tRNA.EF-Tu.GTP complex up to the GTP hydrolysis stage on the ribosome. This is Elongation factor Ts (tsf) from Mycoplasmopsis pulmonis (strain UAB CTIP) (Mycoplasma pulmonis).